We begin with the raw amino-acid sequence, 339 residues long: Homocysteine S-methyltransferase 2 (339 aa).

The region spanning 12–326 (AVRRWVDAAG…NTIRAIHRTL (315 aa)) is the Hcy-binding domain. Zn(2+) is bound by residues C244, C311, and C312.

As to quaternary structure, monomer. It depends on Zn(2+) as a cofactor.

It catalyses the reaction S-methyl-L-methionine + L-homocysteine = 2 L-methionine + H(+). Functionally, catalyzes methyl transfer from S-methylmethionine (SMM) to adenosyl-L-homocysteine (AdoMet). SMM degradation (by HMT-1, HMT-2, HMT-3 and HMT-4) and biosynthesis (by MMT1) constitute the SMM cycle in plants, which is probably required to achieve short term control of AdoMet level. This Zea mays (Maize) protein is Homocysteine S-methyltransferase 2 (HMT-2).